Reading from the N-terminus, the 244-residue chain is Chaperone protein FimB/FhaD (244 aa).

Residues 1-24 (MARWRRRLGVAALGAAMLASLAPA) form the signal peptide.

This sequence belongs to the periplasmic pilus chaperone family.

The protein resides in the periplasm. Functionally, required for the biogenesis of the filamentous hemagglutinin and the fimbria. The sequence is that of Chaperone protein FimB/FhaD (fimB) from Bordetella pertussis (strain Tohama I / ATCC BAA-589 / NCTC 13251).